Consider the following 602-residue polypeptide: MGICVSKPSPEPDLHNHHTSIPVNDTSLPPQDNSIPPKDIAIPAQDNNKPPGKKSPFLPFYSPSPAHFLFSKKSPAVGSPAAGSSNSTPKRLFPFPPPSPAKHIKAAWARRHGSVKPNEAAIPENNEVDGGAGLDKSFGFSKKFGSKFEVGEEVGRGHFGYTCRAKFKKGEFKGQDVAVKVIPKAKMTTAIAIEDVRREVKILRALTGHNNLVQFYDAFEDHTNVYVVMELCEGGELLDRILSRGGKYTEDDAKAVMIQILNVVAFCHLQGVVHRDLKPENFLFKSKDEDSQLKAIDFGLSDYVKPDERLNDIVGSAYYVAPEVLHRSYSTEADVWSIGVISYILLCGSRPFWARTESGIFRAVLKANLSFDEPPWPSVSSEAKDFVKRLLNKDPRKRMTAAQALCHSWIKNSNDIKFPLDILVFKLMKVYMRSSPLRKAALRALSKTLTVDELFYLKEQFVLLEPTKNGTISLENIKQALMRNSTDAMKDSRVLDLLVSLNALQYRRMDFEEFCAAALSVHQLEALDRWEQHARCAYDLFEKDGNRAIMIEELASELGLGPSIPVHAVLHDWIRHTDGKLSFLGYVKLLHGVSTRAIAKAQ.

A disordered region spans residues 1–59 (MGICVSKPSPEPDLHNHHTSIPVNDTSLPPQDNSIPPKDIAIPAQDNNKPPGKKSPFLP). A compositionally biased stretch (polar residues) spans 19–34 (TSIPVNDTSLPPQDNS). Tandem repeats lie at residues 20 to 26 (SIPVNDT), 27 to 33 (SLPPQDN), and 34 to 40 (SIPPKDI). Residues 20–40 (SIPVNDTSLPPQDNSIPPKDI) form a 3 X 7 AA tandem repeats of S-[LI]-P-X-X-D-X region. The 263-residue stretch at 148–410 (FEVGEEVGRG…AAQALCHSWI (263 aa)) folds into the Protein kinase domain. Residues 154–162 (VGRGHFGYT) and lysine 180 contribute to the ATP site. Aspartate 276 acts as the Proton acceptor in catalysis. 4 consecutive EF-hand domains span residues 451–486 (VDELFYLKEQFVLLEPTKNGTISLENIKQALMRNST), 487–527 (DAMK…LEAL), 528–563 (DRWEQHARCAYDLFEKDGNRAIMIEELASELGLGPS), and 564–602 (IPVHAVLHDWIRHTDGKLSFLGYVKLLHGVSTRAIAKAQ).

Belongs to the protein kinase superfamily. CAMK Ser/Thr protein kinase family. CaMK subfamily.

The enzyme catalyses L-seryl-[protein] + ATP = O-phospho-L-seryl-[protein] + ADP + H(+). The catalysed reaction is L-threonyl-[protein] + ATP = O-phospho-L-threonyl-[protein] + ADP + H(+). The sequence is that of CDPK-related protein kinase (CRK) from Daucus carota (Wild carrot).